The primary structure comprises 338 residues: Methionine import ATP-binding protein MetN 2 (338 aa).

Residues 2-242 (IEIEKVCVDF…PQHAFTQQLV (241 aa)) enclose the ABC transporter domain. 39 to 46 (GTSGAGKS) contributes to the ATP binding site.

It belongs to the ABC transporter superfamily. Methionine importer (TC 3.A.1.24) family. In terms of assembly, the complex is composed of two ATP-binding proteins (MetN), two transmembrane proteins (MetI) and a solute-binding protein (MetQ).

It localises to the cell inner membrane. It carries out the reaction L-methionine(out) + ATP + H2O = L-methionine(in) + ADP + phosphate + H(+). The catalysed reaction is D-methionine(out) + ATP + H2O = D-methionine(in) + ADP + phosphate + H(+). Part of the ABC transporter complex MetNIQ involved in methionine import. Responsible for energy coupling to the transport system. The chain is Methionine import ATP-binding protein MetN 2 from Salmonella choleraesuis (strain SC-B67).